Here is a 287-residue protein sequence, read N- to C-terminus: MWKEKVSVTPPYHFDRVLDRLSLDPLNAVDREAREVRVPIRNQAGDVCIVKVQALGHAGEPEFLVSGETDQGEMMKEIKRIFQWENHLQHVLDHFSKTSLSAIFEEHAGTPLVLDYSVYNCMMKCIIHQQLNLSFAYTLTERFVHAFGEQKDGVWCYPKPETIAELDYQDLRDLQFSMRKAEYTIDTSRMIAEGTLSLSELPHMADEDIMKKLIKIRGIGPWTVQNVLMFGLGRPNLFPLADIGLQNAIKRHFQLDDKPAKDVMLAMSKEWEPYLSYASLYLWRSIE.

Asp242 (proton acceptor) is an active-site residue.

This sequence belongs to the alkylbase DNA glycosidase AlkA family.

The enzyme catalyses Hydrolysis of alkylated DNA, releasing 3-methyladenine, 3-methylguanine, 7-methylguanine and 7-methyladenine.. In terms of biological role, hydrolysis of the deoxyribose N-glycosidic bond to excise 3-methyladenine, 3-methylguanine, 7-methylguanine, O2-methylthymine, and O2-methylcytosine from the damaged DNA polymer formed by alkylation lesions. The protein is Putative DNA-3-methyladenine glycosylase YfjP (yfjP) of Bacillus subtilis (strain 168).